A 342-amino-acid chain; its full sequence is Probable transposase for insertion-like sequence element IS1161 (342 aa).

The region spanning 182–342 (IEERPEEINN…KKLFELTQTA (161 aa)) is the Integrase catalytic domain.

It belongs to the transposase IS30 family.

In terms of biological role, required for the transposition of the insertion element. The sequence is that of Probable transposase for insertion-like sequence element IS1161 from Streptococcus salivarius.